A 399-amino-acid chain; its full sequence is Forkhead box protein Q1 (399 aa).

A disordered region spans residues 1 to 112 (MKLEVFAPRA…EGARSKPYTR (112 aa)). Residues 32–54 (LSAAGDDSLGSDGDCAANSPAAG) are compositionally biased toward low complexity. Over residues 55 to 66 (SGAGDLEGGGGE) the composition is skewed to gly residues. The segment at residues 114–205 (PKPPYSYIAL…SEYTFADGVF (92 aa)) is a DNA-binding region (fork-head). The tract at residues 211–263 (RLSHRTTVSASGYGGGSPPGPAGTPQPAPTAGSSPIARSPARQEEGSSPASKF) is disordered. Residues 228-238 (PPGPAGTPQPA) are compositionally biased toward pro residues.

The protein resides in the nucleus. Plays a role in hair follicle differentiation. The protein is Forkhead box protein Q1 (Foxq1) of Rattus norvegicus (Rat).